Reading from the N-terminus, the 153-residue chain is UPF0756 membrane protein BCQ_4399 (153 aa).

4 helical membrane-spanning segments follow: residues 8 to 28 (FLFILLIIGLIAKNQSLTVAI), 54 to 74 (LGVTVITIAVLVPIATGEIGF), 87 to 107 (WIALASGVAVALLAKGGVQLL), and 117 to 137 (LVFGTIIAVALFNGVAVGPLI).

This sequence belongs to the UPF0756 family.

The protein resides in the cell membrane. The sequence is that of UPF0756 membrane protein BCQ_4399 from Bacillus cereus (strain Q1).